Consider the following 727-residue polypeptide: Adhesion G protein-coupled receptor L4 (727 aa).

The signal sequence occupies residues 1 to 19; sequence MKLLLFAAWFSSLLDPCRF. The Extracellular segment spans residues 20–467; that stretch reads LDICQSCHPN…LAHYNVLTRI (448 aa). The EGF-like 1; calcium-binding domain occupies 52-90; the sequence is DDNECETVPEICGLHANCTNYVGGYYCNCLSGFISNGTE. 6 disulfides stabilise this stretch: Cys-56–Cys-69, Cys-63–Cys-78, Cys-106–Cys-118, Cys-112–Cys-127, Cys-408–Cys-438, and Cys-426–Cys-440. An EGF-like 2; calcium-binding domain is found at 102–139; sequence DINECEEDRKCGPNSKCHNNIGSFICSCLRGYTSPAGP. The GAIN-B domain occupies 282-456; sequence TQMQVHAGDV…AILMSSARAN (175 aa). The interval 408 to 456 is GPS; the sequence is CAFWEYSPSMMGHWSLDGCIRTRVNTTHTSCSCNHLTHFAILMSSARAN. A helical transmembrane segment spans residues 468 to 488; sequence TQLGMVISLICLSMCIFTFWF. Residues 489-496 lie on the Cytoplasmic side of the membrane; the sequence is FRDIQNTR. Residues 497–517 traverse the membrane as a helical segment; that stretch reads TTIHKNLCCSLFMAQFIFLIG. Residues 518-535 lie on the Extracellular side of the membrane; it reads INKSAHKWFCSLIAGLLH. The chain crosses the membrane as a helical span at residues 536–556; the sequence is YFFLAAFAWMCIEGIHLYLIV. The Cytoplasmic portion of the chain corresponds to 557 to 568; the sequence is VGVIYNKGFLHR. A helical transmembrane segment spans residues 569–589; that stretch reads NFYAFGYGSPAVVVAISATLG. Residues 590–609 lie on the Extracellular side of the membrane; the sequence is YKYYGTSSVCWLSTENNFIW. The helical transmembrane segment at 610–630 threads the bilayer; that stretch reads SFIGPAILIILVNLLAFAVII. Residues 631–654 lie on the Cytoplasmic side of the membrane; that stretch reads YKVYRHTAVKKPEISHYENIRSCA. A helical membrane pass occupies residues 655 to 675; the sequence is RGAIALLFVLGVTWAFGVMYI. The Extracellular portion of the chain corresponds to 676-682; the sequence is LYETTLT. The helical transmembrane segment at 683-703 threads the bilayer; it reads AYLFTFANVFQGMFIFIFLCV.

This sequence belongs to the G-protein coupled receptor 2 family. Adhesion G-protein coupled receptor (ADGR) subfamily. As to quaternary structure, heterodimer of 2 chains generated by proteolytic processing; the large extracellular N-terminal fragment and the membrane-bound C-terminal fragment predominantly remain associated and non-covalently linked. In terms of processing, autoproteolytically processed at the GPS region of the GAIN-B domain; this cleavage modulates receptor activity.

It is found in the cell membrane. In terms of biological role, orphan receptor that plays a role in vessel formation. In Danio rerio (Zebrafish), this protein is Adhesion G protein-coupled receptor L4.